The sequence spans 504 residues: ATP synthase subunit alpha (504 aa).

169 to 176 is an ATP binding site; that stretch reads GDRQIGKT.

This sequence belongs to the ATPase alpha/beta chains family. F-type ATPases have 2 components, CF(1) - the catalytic core - and CF(0) - the membrane proton channel. CF(1) has five subunits: alpha(3), beta(3), gamma(1), delta(1), epsilon(1). CF(0) has three main subunits: a(1), b(2) and c(9-12). The alpha and beta chains form an alternating ring which encloses part of the gamma chain. CF(1) is attached to CF(0) by a central stalk formed by the gamma and epsilon chains, while a peripheral stalk is formed by the delta and b chains.

Its subcellular location is the cell membrane. It catalyses the reaction ATP + H2O + 4 H(+)(in) = ADP + phosphate + 5 H(+)(out). Its function is as follows. Produces ATP from ADP in the presence of a proton gradient across the membrane. The alpha chain is a regulatory subunit. This is ATP synthase subunit alpha from Syntrophomonas wolfei subsp. wolfei (strain DSM 2245B / Goettingen).